A 403-amino-acid chain; its full sequence is S-adenosylmethionine synthase (403 aa).

Residue His15 coordinates ATP. Asp17 provides a ligand contact to Mg(2+). K(+) is bound at residue Glu43. L-methionine-binding residues include Glu56 and Gln99. The tract at residues 99 to 109 is flexible loop; sequence QSPHIAQGVDR. ATP-binding positions include 166-168, 232-233, Asp241, 247-248, Ala264, and Lys268; these read DAK, KF, and RK. Asp241 provides a ligand contact to L-methionine. L-methionine is bound at residue Lys272.

It belongs to the AdoMet synthase family. Homotetramer; dimer of dimers. Requires Mg(2+) as cofactor. The cofactor is K(+).

The protein resides in the cytoplasm. The enzyme catalyses L-methionine + ATP + H2O = S-adenosyl-L-methionine + phosphate + diphosphate. Its pathway is amino-acid biosynthesis; S-adenosyl-L-methionine biosynthesis; S-adenosyl-L-methionine from L-methionine: step 1/1. In terms of biological role, catalyzes the formation of S-adenosylmethionine (AdoMet) from methionine and ATP. The overall synthetic reaction is composed of two sequential steps, AdoMet formation and the subsequent tripolyphosphate hydrolysis which occurs prior to release of AdoMet from the enzyme. This chain is S-adenosylmethionine synthase, found in Stenotrophomonas maltophilia (strain R551-3).